A 251-amino-acid chain; its full sequence is Probable transcriptional regulatory protein BLA_1344 (251 aa).

The protein belongs to the TACO1 family.

The protein resides in the cytoplasm. This Bifidobacterium animalis subsp. lactis (strain AD011) protein is Probable transcriptional regulatory protein BLA_1344.